We begin with the raw amino-acid sequence, 438 residues long: Adenylosuccinate synthetase (438 aa).

Residues 13–19 (GDEGKGK) and 41–43 (GHT) contribute to the GTP site. The Proton acceptor role is filled by Asp14. The Mg(2+) site is built by Asp14 and Gly41. IMP-binding positions include 14–17 (DEGK), 39–42 (NAGH), Thr130, Arg144, Gln225, Thr240, and Arg310. The Proton donor role is filled by His42. 306–312 (ATTGRLR) lines the substrate pocket. Residues Arg312, 338–340 (KLD), and 421–423 (STG) contribute to the GTP site.

It belongs to the adenylosuccinate synthetase family. As to quaternary structure, homodimer. Mg(2+) is required as a cofactor.

It is found in the cytoplasm. The catalysed reaction is IMP + L-aspartate + GTP = N(6)-(1,2-dicarboxyethyl)-AMP + GDP + phosphate + 2 H(+). Its pathway is purine metabolism; AMP biosynthesis via de novo pathway; AMP from IMP: step 1/2. Plays an important role in the de novo pathway of purine nucleotide biosynthesis. Catalyzes the first committed step in the biosynthesis of AMP from IMP. This is Adenylosuccinate synthetase from Vibrio vulnificus (strain YJ016).